Consider the following 236-residue polypeptide: Phosphoglycolate phosphatase (236 aa).

Residue D14 is the Nucleophile of the active site. D14, D16, and D177 together coordinate Mg(2+).

It belongs to the HAD-like hydrolase superfamily. CbbY/CbbZ/Gph/YieH family. It depends on Mg(2+) as a cofactor.

It catalyses the reaction 2-phosphoglycolate + H2O = glycolate + phosphate. It functions in the pathway organic acid metabolism; glycolate biosynthesis; glycolate from 2-phosphoglycolate: step 1/1. In terms of biological role, specifically catalyzes the dephosphorylation of 2-phosphoglycolate. Is involved in the dissimilation of the intracellular 2-phosphoglycolate formed during the DNA repair of 3'-phosphoglycolate ends, a major class of DNA lesions induced by oxidative stress. The polypeptide is Phosphoglycolate phosphatase (Neisseria gonorrhoeae (strain ATCC 700825 / FA 1090)).